A 146-amino-acid polypeptide reads, in one-letter code: Large ribosomal subunit protein uL15 (146 aa).

Residues 1 to 18 show a composition bias toward basic and acidic residues; sequence MKLHELKPSEGSRKERNR. Residues 1-50 form a disordered region; it reads MKLHELKPSEGSRKERNRVGRGTGSGNGKTSGRGHKGQKARSGGGVRLGF. Over residues 21-31 the composition is skewed to gly residues; that stretch reads RGTGSGNGKTS.

It belongs to the universal ribosomal protein uL15 family. Part of the 50S ribosomal subunit.

Functionally, binds to the 23S rRNA. The polypeptide is Large ribosomal subunit protein uL15 (Listeria monocytogenes serotype 4b (strain CLIP80459)).